The primary structure comprises 520 residues: UDP-N-acetylmuramoyl-L-alanyl-D-glutamate--2,6-diaminopimelate ligase (520 aa).

Leu-48 contacts UDP-N-acetyl-alpha-D-muramoyl-L-alanyl-D-glutamate. Residue 134–140 participates in ATP binding; that stretch reads GTSGKTT. Residues 176–177, Ser-203, and Arg-211 each bind UDP-N-acetyl-alpha-D-muramoyl-L-alanyl-D-glutamate; that span reads TT. Lys-243 carries the N6-carboxylysine modification. Meso-2,6-diaminopimelate is bound by residues Arg-405, 429 to 432, Gly-483, and Glu-487; that span reads DNPR. Positions 429-432 match the Meso-diaminopimelate recognition motif motif; it reads DNPR.

Belongs to the MurCDEF family. MurE subfamily. Mg(2+) serves as cofactor. Post-translationally, carboxylation is probably crucial for Mg(2+) binding and, consequently, for the gamma-phosphate positioning of ATP.

The protein resides in the cytoplasm. The catalysed reaction is UDP-N-acetyl-alpha-D-muramoyl-L-alanyl-D-glutamate + meso-2,6-diaminopimelate + ATP = UDP-N-acetyl-alpha-D-muramoyl-L-alanyl-gamma-D-glutamyl-meso-2,6-diaminopimelate + ADP + phosphate + H(+). It participates in cell wall biogenesis; peptidoglycan biosynthesis. Functionally, catalyzes the addition of meso-diaminopimelic acid to the nucleotide precursor UDP-N-acetylmuramoyl-L-alanyl-D-glutamate (UMAG) in the biosynthesis of bacterial cell-wall peptidoglycan. This chain is UDP-N-acetylmuramoyl-L-alanyl-D-glutamate--2,6-diaminopimelate ligase, found in Mycobacterium avium (strain 104).